A 455-amino-acid chain; its full sequence is Inactive peptidyl-prolyl cis-trans isomerase shutdown (455 aa).

The interval 34-54 (SQQNHARDLGLDSDSDSDYED) is disordered. Residues 44-54 (LDSDSDSDYED) show a composition bias toward acidic residues. Residues 103 to 192 (KARVSVRYSG…LFKVEVIDYS (90 aa)) enclose the PPIase FKBP-type domain. TPR repeat units lie at residues 218-251 (AVDLHLHGKDSVKLGRYQSAATAFERAVSSLNYC) and 303-336 (CKALFQEGRALAALGEYNLARNAYLQAQAKQPAN).

It belongs to the FKBP6 family. Interacts with Hsp83. In terms of tissue distribution, strongly expressed in the germline stem cells and in 16-cell cysts. Present in the germ cells throughout embryogenesis. Defects are due to derepression of transposable elements and impaired piRNA biogenesis.

Its subcellular location is the cytoplasm. It localises to the cytoplasmic ribonucleoprotein granule. In terms of biological role, co-chaperone required during oogenesis to repress transposable elements and prevent their mobilization, which is essential for the germline integrity. Acts via the piRNA metabolic process, which mediates the repression of transposable elements during meiosis by forming complexes composed of piRNAs and Piwi proteins and govern the methylation and subsequent repression of transposons. Acts as a co-chaperone via its interaction with Hsp83/HSP90 and is required for the biogenesis of all three piRNA major populations. This Drosophila melanogaster (Fruit fly) protein is Inactive peptidyl-prolyl cis-trans isomerase shutdown.